Here is a 501-residue protein sequence, read N- to C-terminus: MTDTQNKNYIIALDQGTTSSRAIIFDRDANVVSTAQSEFVQHYPQAGWVEHDPMEIFATQTACMTKALAQADLHHNQIAAIGITNQRETTVIWERDTGRPIYNAIVWQCRRSTEICQQLKRDGLEEYIKDTTGLVIDPYFSGSKVKWILDNVEGSRERARKGELMFGTIDTWLIWKFTGGKVHVTDYTNASRTMLFNIHTLEWDQRMLDVLDIPREILPEVKASSEVYGHSKSGIPIAGIAGDQQAALFGQMCVEPGQAKNTYGTGCFLLMNTGKKAVKSAQGMLTTIGCGPRGEVAYALEGAVFNGGSTVQWLRDELKLINDALDTEYFASKVKDSNGVYLVPAFTGLGAPYWDPYARGALFGLTRGVKVDHIIRAALESIAYQTRDVLDAMQQDSGERLKSLRVDGGAVANNFLMQFQADILGTHVERPQMRETTALGAAFLAGLAIGFWSSLDELRNKAVIERVFEPSCEEAHREKLYAGWQKAVARTRDWEPHENEE.

Position 17 (Thr-17) interacts with ADP. ATP contacts are provided by Thr-17, Thr-18, and Ser-19. Residue Thr-17 coordinates sn-glycerol 3-phosphate. An ADP-binding site is contributed by Arg-21. Arg-87, Glu-88, Tyr-139, and Asp-243 together coordinate sn-glycerol 3-phosphate. The glycerol site is built by Arg-87, Glu-88, Tyr-139, Asp-243, and Gln-244. ADP contacts are provided by Thr-265 and Gly-308. Positions 265, 308, 312, and 409 each coordinate ATP. 2 residues coordinate ADP: Gly-409 and Asn-413.

Belongs to the FGGY kinase family.

The catalysed reaction is glycerol + ATP = sn-glycerol 3-phosphate + ADP + H(+). The protein operates within polyol metabolism; glycerol degradation via glycerol kinase pathway; sn-glycerol 3-phosphate from glycerol: step 1/1. Its activity is regulated as follows. Inhibited by fructose 1,6-bisphosphate (FBP). Key enzyme in the regulation of glycerol uptake and metabolism. Catalyzes the phosphorylation of glycerol to yield sn-glycerol 3-phosphate. In Pseudomonas savastanoi pv. phaseolicola (strain 1448A / Race 6) (Pseudomonas syringae pv. phaseolicola (strain 1448A / Race 6)), this protein is Glycerol kinase.